The following is a 257-amino-acid chain: Thiazole synthase (257 aa).

Lys-98 functions as the Schiff-base intermediate with DXP in the catalytic mechanism. 1-deoxy-D-xylulose 5-phosphate contacts are provided by residues Gly-159, 185-186 (AG), and 207-208 (NT).

The protein belongs to the ThiG family. In terms of assembly, homotetramer. Forms heterodimers with either ThiH or ThiS.

It localises to the cytoplasm. It catalyses the reaction [ThiS sulfur-carrier protein]-C-terminal-Gly-aminoethanethioate + 2-iminoacetate + 1-deoxy-D-xylulose 5-phosphate = [ThiS sulfur-carrier protein]-C-terminal Gly-Gly + 2-[(2R,5Z)-2-carboxy-4-methylthiazol-5(2H)-ylidene]ethyl phosphate + 2 H2O + H(+). Its pathway is cofactor biosynthesis; thiamine diphosphate biosynthesis. Catalyzes the rearrangement of 1-deoxy-D-xylulose 5-phosphate (DXP) to produce the thiazole phosphate moiety of thiamine. Sulfur is provided by the thiocarboxylate moiety of the carrier protein ThiS. In vitro, sulfur can be provided by H(2)S. This chain is Thiazole synthase, found in Anaeromyxobacter sp. (strain Fw109-5).